The primary structure comprises 468 residues: Pentatricopeptide repeat-containing protein At5g46680 (468 aa).

PPR repeat units lie at residues 12 to 46 (STKL…GVLP), 47 to 81 (DVIT…GIEP), 82 to 116 (DVTT…GLSP), 117 to 152 (DMWS…GLVP), 153 to 183 (GIDT…LKSR), 187 to 221 (ELMT…GYTP), 222 to 256 (NAVT…GYTF), 257 to 291 (DGFA…GTRS), 293 to 327 (DIVS…GLKP), 328 to 362 (DDYT…GMQP), 363 to 393 (SVVT…MEVR), and 394 to 428 (DEFT…GMKI).

Belongs to the PPR family. P subfamily.

The protein is Pentatricopeptide repeat-containing protein At5g46680 of Arabidopsis thaliana (Mouse-ear cress).